The following is a 580-amino-acid chain: Glutamyl-tRNA(Gln) amidotransferase subunit B-2, chloroplastic/mitochondrial (580 aa).

2 stretches are compositionally biased toward low complexity: residues 20-35 (RRDATAAASTSAATVS) and 42-59 (AVSTTTTTSSSSSSSAAV). Residues 20 to 64 (RRDATAAASTSAATVSRGRRARAVSTTTTTSSSSSSSAAVDARDA) form a disordered region.

The protein belongs to the GatB/GatE family. GatB subfamily. In terms of assembly, subunit of the heterotrimeric GatCAB amidotransferase (AdT) complex, composed of A, B and C subunits.

The protein localises to the mitochondrion. It localises to the plastid. Its subcellular location is the chloroplast. It carries out the reaction L-glutamyl-tRNA(Gln) + L-glutamine + ATP + H2O = L-glutaminyl-tRNA(Gln) + L-glutamate + ADP + phosphate + H(+). Its function is as follows. Allows the formation of correctly charged Gln-tRNA(Gln) through the transamidation of misacylated Glu-tRNA(Gln) in chloroplasts and mitochondria. The reaction takes place in the presence of glutamine and ATP through an activated gamma-phospho-Glu-tRNA(Gln). The sequence is that of Glutamyl-tRNA(Gln) amidotransferase subunit B-2, chloroplastic/mitochondrial from Micromonas pusilla (strain CCMP1545) (Picoplanktonic green alga).